We begin with the raw amino-acid sequence, 93 residues long: Stage III sporulation protein D (93 aa).

The region spanning 4–75 (YIKERTIKIG…IRHLRGGEAT (72 aa)) is the HTH deoR-type domain. A DNA-binding region (H-T-H motif) is located at residues 21-40 (KTVRVIAKEFGVSKSTVHKD).

Functionally, this protein regulates the transcription of sigK, which encodes mother cell chamber RNA polymerase sigma-factor (sigma K). The polypeptide is Stage III sporulation protein D (spoIIID) (Bacillus subtilis (strain 168)).